Reading from the N-terminus, the 227-residue chain is UPF0758 protein LPC_1989 (227 aa).

Positions 102-225 (QLSNTQQTYA…YSIFAENKWV (124 aa)) constitute an MPN domain. Zn(2+) contacts are provided by histidine 173, histidine 175, and aspartate 186. The JAMM motif signature appears at 173–186 (HNHPSGLSDASQQD).

It belongs to the UPF0758 family.

The sequence is that of UPF0758 protein LPC_1989 from Legionella pneumophila (strain Corby).